The following is a 930-amino-acid chain: Isoleucine--tRNA ligase (930 aa).

Positions 57-67 (PYANGNIHVGH) match the 'HIGH' region motif. Residue Glu554 participates in L-isoleucyl-5'-AMP binding. The 'KMSKS' region signature appears at 595–599 (KMSKS). Lys598 is an ATP binding site. Zn(2+) is bound by residues Cys888, Cys891, Cys908, and Cys911.

It belongs to the class-I aminoacyl-tRNA synthetase family. IleS type 1 subfamily. Monomer. The cofactor is Zn(2+).

The protein resides in the cytoplasm. It catalyses the reaction tRNA(Ile) + L-isoleucine + ATP = L-isoleucyl-tRNA(Ile) + AMP + diphosphate. In terms of biological role, catalyzes the attachment of isoleucine to tRNA(Ile). As IleRS can inadvertently accommodate and process structurally similar amino acids such as valine, to avoid such errors it has two additional distinct tRNA(Ile)-dependent editing activities. One activity is designated as 'pretransfer' editing and involves the hydrolysis of activated Val-AMP. The other activity is designated 'posttransfer' editing and involves deacylation of mischarged Val-tRNA(Ile). This is Isoleucine--tRNA ligase from Streptococcus gordonii (strain Challis / ATCC 35105 / BCRC 15272 / CH1 / DL1 / V288).